An 803-amino-acid polypeptide reads, in one-letter code: Phenylalanine--tRNA ligase beta subunit (803 aa).

A tRNA-binding domain is found at 40 to 153 (ASLDRRIVVG…SSWEIGKPFA (114 aa)). The 77-residue stretch at 400-476 (ADLQLLALRP…RLYGYNAIES (77 aa)) folds into the B5 domain. Mg(2+) is bound by residues Asp454, Asp460, Glu463, and Glu464. The 93-residue stretch at 709–801 (SRFPVVERDI…AESKLGAVIR (93 aa)) folds into the FDX-ACB domain.

It belongs to the phenylalanyl-tRNA synthetase beta subunit family. Type 1 subfamily. Tetramer of two alpha and two beta subunits. It depends on Mg(2+) as a cofactor.

The protein localises to the cytoplasm. It carries out the reaction tRNA(Phe) + L-phenylalanine + ATP = L-phenylalanyl-tRNA(Phe) + AMP + diphosphate + H(+). The chain is Phenylalanine--tRNA ligase beta subunit from Chlorobium chlorochromatii (strain CaD3).